The sequence spans 103 residues: Large ribosomal subunit protein bL25 (103 aa).

It belongs to the bacterial ribosomal protein bL25 family. Part of the 50S ribosomal subunit; part of the 5S rRNA/L5/L18/L25 subcomplex. Contacts the 5S rRNA. Binds to the 5S rRNA independently of L5 and L18.

Functionally, this is one of the proteins that binds to the 5S RNA in the ribosome where it forms part of the central protuberance. The polypeptide is Large ribosomal subunit protein bL25 (Blochmanniella floridana).